The primary structure comprises 108 residues: ER membrane protein complex subunit 6 (108 aa).

The next 3 membrane-spanning stretches (helical) occupy residues 21–41 (VVSF…GILG), 45–65 (YEGL…LFAL), and 86–106 (ILDG…LVYV).

The protein belongs to the EMC6 family.

The protein resides in the endoplasmic reticulum membrane. The sequence is that of ER membrane protein complex subunit 6 from Schizosaccharomyces pombe (strain 972 / ATCC 24843) (Fission yeast).